The chain runs to 114 residues: Notch-regulated ankyrin repeat-containing protein (114 aa).

ANK repeat units lie at residues 50–79 and 83–112; these read EGQTALHQSVIDGNLELVKLLVKFGADIRL and DGWSALHIAAYGGHQDIVLYLITKAKYSSS.

It belongs to the NRARP family. In terms of assembly, forms a ternary complex with the intracellular domain (ICD) of notch1 and rbpj/suh.

Functionally, promotes loss of intracellular domain (ICD) of Notch1 in embryos. By down-regulating ICD levels, could function as a negative feedback regulator of Notch signaling that attenuates ICD-mediated transcription. Involved in angiogenesis. May be involved in somitogenesis. The protein is Notch-regulated ankyrin repeat-containing protein (nrarp) of Xenopus tropicalis (Western clawed frog).